Consider the following 203-residue polypeptide: Orotate phosphoribosyltransferase (203 aa).

5-phospho-alpha-D-ribose 1-diphosphate is bound by residues R94, K98, H100, and 120–128 (EDLISTGGS). S124 lines the orotate pocket.

It belongs to the purine/pyrimidine phosphoribosyltransferase family. PyrE subfamily. Homodimer. Mg(2+) is required as a cofactor.

The catalysed reaction is orotidine 5'-phosphate + diphosphate = orotate + 5-phospho-alpha-D-ribose 1-diphosphate. It participates in pyrimidine metabolism; UMP biosynthesis via de novo pathway; UMP from orotate: step 1/2. Functionally, catalyzes the transfer of a ribosyl phosphate group from 5-phosphoribose 1-diphosphate to orotate, leading to the formation of orotidine monophosphate (OMP). The sequence is that of Orotate phosphoribosyltransferase from Staphylococcus epidermidis (strain ATCC 35984 / DSM 28319 / BCRC 17069 / CCUG 31568 / BM 3577 / RP62A).